We begin with the raw amino-acid sequence, 259 residues long: Glutamate 5-kinase (259 aa).

Position 18 (lysine 18) interacts with ATP. Residues serine 54, aspartate 141, and asparagine 153 each contribute to the substrate site. 173-174 (SD) is an ATP binding site.

The protein belongs to the glutamate 5-kinase family.

The protein localises to the cytoplasm. The catalysed reaction is L-glutamate + ATP = L-glutamyl 5-phosphate + ADP. It functions in the pathway amino-acid biosynthesis; L-proline biosynthesis; L-glutamate 5-semialdehyde from L-glutamate: step 1/2. Functionally, catalyzes the transfer of a phosphate group to glutamate to form L-glutamate 5-phosphate. The protein is Glutamate 5-kinase of Clavibacter michiganensis subsp. michiganensis (strain NCPPB 382).